Reading from the N-terminus, the 268-residue chain is Aliphatic sulfonates import ATP-binding protein SsuB (268 aa).

Positions 15–236 constitute an ABC transporter domain; sequence LAVRNLQKTF…VRGSHRLAAL (222 aa). 47–54 contacts ATP; the sequence is GRSGCGKS.

Belongs to the ABC transporter superfamily. Aliphatic sulfonates importer (TC 3.A.1.17.2) family. As to quaternary structure, the complex is composed of two ATP-binding proteins (SsuB), two transmembrane proteins (SsuC) and a solute-binding protein (SsuA).

Its subcellular location is the cell inner membrane. It catalyses the reaction ATP + H2O + aliphatic sulfonate-[sulfonate-binding protein]Side 1 = ADP + phosphate + aliphatic sulfonateSide 2 + [sulfonate-binding protein]Side 1.. Functionally, part of the ABC transporter complex SsuABC involved in aliphatic sulfonates import. Responsible for energy coupling to the transport system. The sequence is that of Aliphatic sulfonates import ATP-binding protein SsuB from Pseudomonas fluorescens (strain Pf0-1).